A 253-amino-acid polypeptide reads, in one-letter code: Triosephosphate isomerase (253 aa).

A substrate-binding site is contributed by 9–11 (NWK). H94 functions as the Electrophile in the catalytic mechanism. E163 serves as the catalytic Proton acceptor. Substrate is bound by residues G169, S209, and 230 to 231 (GG).

It belongs to the triosephosphate isomerase family. As to quaternary structure, homodimer.

Its subcellular location is the cytoplasm. It carries out the reaction D-glyceraldehyde 3-phosphate = dihydroxyacetone phosphate. It participates in carbohydrate biosynthesis; gluconeogenesis. It functions in the pathway carbohydrate degradation; glycolysis; D-glyceraldehyde 3-phosphate from glycerone phosphate: step 1/1. Involved in the gluconeogenesis. Catalyzes stereospecifically the conversion of dihydroxyacetone phosphate (DHAP) to D-glyceraldehyde-3-phosphate (G3P). The polypeptide is Triosephosphate isomerase (Dehalococcoides mccartyi (strain CBDB1)).